Here is a 213-residue protein sequence, read N- to C-terminus: Orotate phosphoribosyltransferase (213 aa).

Lys-26 contacts 5-phospho-alpha-D-ribose 1-diphosphate. An orotate-binding site is contributed by Phe-34 to Phe-35. 5-phospho-alpha-D-ribose 1-diphosphate contacts are provided by residues Tyr-72–Lys-73, Arg-99, Lys-100, Lys-103, His-105, and Asp-124–Ala-132. The orotate site is built by Thr-128 and Arg-156.

The protein belongs to the purine/pyrimidine phosphoribosyltransferase family. PyrE subfamily. As to quaternary structure, homodimer. The cofactor is Mg(2+).

The catalysed reaction is orotidine 5'-phosphate + diphosphate = orotate + 5-phospho-alpha-D-ribose 1-diphosphate. It functions in the pathway pyrimidine metabolism; UMP biosynthesis via de novo pathway; UMP from orotate: step 1/2. Functionally, catalyzes the transfer of a ribosyl phosphate group from 5-phosphoribose 1-diphosphate to orotate, leading to the formation of orotidine monophosphate (OMP). The polypeptide is Orotate phosphoribosyltransferase (Haemophilus influenzae (strain ATCC 51907 / DSM 11121 / KW20 / Rd)).